Consider the following 229-residue polypeptide: tRNA (guanine-N(7)-)-methyltransferase (229 aa).

S-adenosyl-L-methionine contacts are provided by Glu-62, Glu-87, Asp-114, and Asp-137. Asp-137 is an active-site residue. A substrate-binding site is contributed by Lys-141. An interaction with RNA region spans residues Lys-143–Arg-148. Substrate contacts are provided by residues Asp-173 and Thr-208–Glu-211.

The protein belongs to the class I-like SAM-binding methyltransferase superfamily. TrmB family.

The catalysed reaction is guanosine(46) in tRNA + S-adenosyl-L-methionine = N(7)-methylguanosine(46) in tRNA + S-adenosyl-L-homocysteine. Its pathway is tRNA modification; N(7)-methylguanine-tRNA biosynthesis. Functionally, catalyzes the formation of N(7)-methylguanine at position 46 (m7G46) in tRNA. The chain is tRNA (guanine-N(7)-)-methyltransferase from Francisella tularensis subsp. novicida (strain U112).